The following is a 444-amino-acid chain: Citrate-proton symporter (444 aa).

The Cytoplasmic segment spans residues 1-41; that stretch reads MPTARCSMRASSTAPVRMMATAGGARIGAILRVTSGNFLEQ. The chain crosses the membrane as a helical span at residues 42–62; sequence FDFFLFGFYATYIAHTFFPAS. The Periplasmic segment spans residues 63 to 72; sequence SEFASLMMTF. The helical transmembrane segment at 73-93 threads the bilayer; it reads AVFGAGFLMRPIGAIVLGAYI. Over 94 to 114 the chain is Cytoplasmic; that stretch reads DKVGRRKGLIVTLSIMATGTF. A helical transmembrane segment spans residues 115-135; sequence LIVLIPSYQTIGLWAPLLVLI. The Periplasmic portion of the chain corresponds to 136 to 137; it reads GR. Residues 138-158 traverse the membrane as a helical segment; it reads LLQGFSAGAELGGVSVYLAEI. Topologically, residues 159-177 are cytoplasmic; that stretch reads ATPGRKGFYTSWQSGSQQV. Residues 178–198 form a helical membrane-spanning segment; it reads AIMVAAAMGFALNAVLEPSAI. S199 is a topological domain (periplasmic). The chain crosses the membrane as a helical span at residues 200 to 220; it reads DWGWRIPFLFGVLIVPFIFIL. Over 221 to 251 the chain is Cytoplasmic; the sequence is RRKLEETQEFTARRHHLAMRQVFATLLANWQ. Residues 252–272 traverse the membrane as a helical segment; the sequence is VVIAGMMMVAMTTTAFYLITV. Residues 273–289 are Periplasmic-facing; the sequence is YAPTFGKKVLMLSASDS. Residues 290–310 traverse the membrane as a helical segment; sequence LLVTLLVAISNFFWLPVGGAL. Topologically, residues 311–318 are cytoplasmic; that stretch reads SDRFGRRS. A helical transmembrane segment spans residues 319–339; the sequence is VLIAMTLLALATAWPALTMLA. Position 340 (N340) is a topological domain, periplasmic. A helical membrane pass occupies residues 341 to 361; it reads APSFLMMLSVLLWLSFIYGMY. Residues 362-379 are Cytoplasmic-facing; the sequence is NGAMIPALTEIMPAEVRV. Residues 380 to 400 form a helical membrane-spanning segment; sequence AGFSLAYSLATAVFGGFTPVI. Residues 401 to 411 lie on the Periplasmic side of the membrane; the sequence is STALIEYTGDK. The chain crosses the membrane as a helical span at residues 412–432; it reads ASPGYWMSFAAICGLLATCYL. Residues 433 to 444 lie on the Cytoplasmic side of the membrane; it reads YRRSAVALQTAR.

Belongs to the major facilitator superfamily. Metabolite:H+ Symporter (MHS) family (TC 2.A.1.6) family.

It is found in the cell inner membrane. Functionally, uptake of citrate across the boundary membrane with the concomitant transport of protons into the cell (symport system). The protein is Citrate-proton symporter (citH) of Klebsiella pneumoniae.